A 291-amino-acid chain; its full sequence is Phosphatidylserine decarboxylase proenzyme (291 aa).

Active-site charge relay system; for autoendoproteolytic cleavage activity residues include D93, H150, and S253. S253 acts as the Schiff-base intermediate with substrate; via pyruvic acid; for decarboxylase activity in catalysis. Residue S253 is modified to Pyruvic acid (Ser); by autocatalysis.

The protein belongs to the phosphatidylserine decarboxylase family. PSD-B subfamily. Prokaryotic type I sub-subfamily. In terms of assembly, heterodimer of a large membrane-associated beta subunit and a small pyruvoyl-containing alpha subunit. It depends on pyruvate as a cofactor. In terms of processing, is synthesized initially as an inactive proenzyme. Formation of the active enzyme involves a self-maturation process in which the active site pyruvoyl group is generated from an internal serine residue via an autocatalytic post-translational modification. Two non-identical subunits are generated from the proenzyme in this reaction, and the pyruvate is formed at the N-terminus of the alpha chain, which is derived from the carboxyl end of the proenzyme. The autoendoproteolytic cleavage occurs by a canonical serine protease mechanism, in which the side chain hydroxyl group of the serine supplies its oxygen atom to form the C-terminus of the beta chain, while the remainder of the serine residue undergoes an oxidative deamination to produce ammonia and the pyruvoyl prosthetic group on the alpha chain. During this reaction, the Ser that is part of the protease active site of the proenzyme becomes the pyruvoyl prosthetic group, which constitutes an essential element of the active site of the mature decarboxylase.

It is found in the cell membrane. It catalyses the reaction a 1,2-diacyl-sn-glycero-3-phospho-L-serine + H(+) = a 1,2-diacyl-sn-glycero-3-phosphoethanolamine + CO2. Its pathway is phospholipid metabolism; phosphatidylethanolamine biosynthesis; phosphatidylethanolamine from CDP-diacylglycerol: step 2/2. In terms of biological role, catalyzes the formation of phosphatidylethanolamine (PtdEtn) from phosphatidylserine (PtdSer). The protein is Phosphatidylserine decarboxylase proenzyme of Alcanivorax borkumensis (strain ATCC 700651 / DSM 11573 / NCIMB 13689 / SK2).